Here is a 653-residue protein sequence, read N- to C-terminus: Extracellular metalloproteinase (653 aa).

A signal peptide spans Met1–Gly19. A propeptide spanning residues His20–Asp244 is cleaved from the precursor. N-linked (GlcNAc...) asparagine glycans are attached at residues Asn327, Asn336, and Asn412. Residue His429 coordinates Zn(2+). Glu430 is a catalytic residue. His433 serves as a coordination point for Zn(2+). Asn636 and Asn637 each carry an N-linked (GlcNAc...) asparagine glycan.

It belongs to the peptidase M36 family. The cofactor is Zn(2+).

The protein localises to the secreted. Secreted metalloproteinase that allows assimilation of proteinaceous substrates. The sequence is that of Extracellular metalloproteinase (MEP) from Pyrenophora tritici-repentis (strain Pt-1C-BFP) (Wheat tan spot fungus).